A 112-amino-acid chain; its full sequence is Iron-sulfur cluster assembly protein CyaY (112 aa).

The protein belongs to the frataxin family.

Functionally, involved in iron-sulfur (Fe-S) cluster assembly. May act as a regulator of Fe-S biogenesis. The protein is Iron-sulfur cluster assembly protein CyaY of Herminiimonas arsenicoxydans.